A 422-amino-acid chain; its full sequence is Ribonuclease Y (422 aa).

A KH domain is found at 112-172; it reads TTNIVKLPSD…IRREIATRTL (61 aa). Residues 238–331 form the HD domain; it reads VLAHSIEVAK…VAIADSISAS (94 aa).

The protein belongs to the RNase Y family.

Endoribonuclease that initiates mRNA decay. This chain is Ribonuclease Y, found in Mycoplasma mycoides.